A 673-amino-acid polypeptide reads, in one-letter code: DNA ligase (673 aa).

NAD(+) contacts are provided by residues 33 to 37 (DYEYD), 82 to 83 (SL), and E113. Catalysis depends on K115, which acts as the N6-AMP-lysine intermediate. NAD(+) contacts are provided by R136, E170, K285, and K309. The Zn(2+) site is built by C403, C406, C421, and C426. The region spanning 583–672 (AKSDILKGYT…SREEAEKILM (90 aa)) is the BRCT domain.

It belongs to the NAD-dependent DNA ligase family. LigA subfamily. The cofactor is Mg(2+). Requires Mn(2+) as cofactor.

It carries out the reaction NAD(+) + (deoxyribonucleotide)n-3'-hydroxyl + 5'-phospho-(deoxyribonucleotide)m = (deoxyribonucleotide)n+m + AMP + beta-nicotinamide D-nucleotide.. DNA ligase that catalyzes the formation of phosphodiester linkages between 5'-phosphoryl and 3'-hydroxyl groups in double-stranded DNA using NAD as a coenzyme and as the energy source for the reaction. It is essential for DNA replication and repair of damaged DNA. This is DNA ligase from Caldicellulosiruptor bescii (strain ATCC BAA-1888 / DSM 6725 / KCTC 15123 / Z-1320) (Anaerocellum thermophilum).